A 296-amino-acid chain; its full sequence is MIKQYLQVTKPGIIFGNLISVIGGFLLAAQGRIDYPLFLATLVGVSLVVASGCVFNNVIDRDIDKKMERTKNRVLVKGLISLKVTLVYASLLGIAGFALLYIAANPLAMWLAVMGFVVYVGVYSLYMKRHSVYGTLIGSLSGAAPPVIGYCAVSNQFDAGALILLLIFSLWQMPHSYAIAIFRFKDYQAANIPVLPVVKGISVAKNHITLYIVAFAVATLMLSLGGYAGYKYLIVAAAVSVWWLGMALSGYKNAIDDRVWARKLFVFSIVAITSLSVMMSVDSMAPAHEVLLTYLR.

The next 9 membrane-spanning stretches (helical) occupy residues Pro-11 to Gly-31, Tyr-35 to Phe-55, Val-84 to Ala-104, Leu-107 to Met-127, Val-132 to Ala-152, Leu-162 to Phe-182, Ile-208 to Ala-228, Gly-229 to Ser-249, and Leu-264 to Met-284.

It belongs to the UbiA prenyltransferase family. Protoheme IX farnesyltransferase subfamily.

The protein localises to the cell inner membrane. The enzyme catalyses heme b + (2E,6E)-farnesyl diphosphate + H2O = Fe(II)-heme o + diphosphate. It functions in the pathway porphyrin-containing compound metabolism; heme O biosynthesis; heme O from protoheme: step 1/1. In terms of biological role, converts heme B (protoheme IX) to heme O by substitution of the vinyl group on carbon 2 of heme B porphyrin ring with a hydroxyethyl farnesyl side group. The protein is Protoheme IX farnesyltransferase of Pectobacterium carotovorum subsp. carotovorum (strain PC1).